The sequence spans 376 residues: uncharacterized protein (376 aa).

A helical membrane pass occupies residues 19-39; the sequence is FVLISLILLLNLGLLLGIQIY.

The protein to S.pombe SpAC5H10.12c.

It localises to the cytoplasm. Its subcellular location is the nucleus. The protein resides in the membrane. This is an uncharacterized protein from Schizosaccharomyces pombe (strain 972 / ATCC 24843) (Fission yeast).